The primary structure comprises 575 residues: Aspartate--tRNA ligase (575 aa).

Position 169 (E169) interacts with L-aspartate. The tract at residues 193–196 (QLFK) is aspartate. R215 provides a ligand contact to L-aspartate. ATP-binding positions include 215 to 217 (RDE) and Q224. L-aspartate is bound at residue H438. E472 contributes to the ATP binding site. Position 479 (R479) interacts with L-aspartate. 524-527 (GLDR) is an ATP binding site.

Belongs to the class-II aminoacyl-tRNA synthetase family. Type 1 subfamily. Homodimer.

It is found in the cytoplasm. The enzyme catalyses tRNA(Asp) + L-aspartate + ATP = L-aspartyl-tRNA(Asp) + AMP + diphosphate. Functionally, catalyzes the attachment of L-aspartate to tRNA(Asp) in a two-step reaction: L-aspartate is first activated by ATP to form Asp-AMP and then transferred to the acceptor end of tRNA(Asp). The chain is Aspartate--tRNA ligase from Mycoplasma capricolum subsp. capricolum (strain California kid / ATCC 27343 / NCTC 10154).